The chain runs to 52 residues: Large ribosomal subunit protein eL39 (52 aa).

It belongs to the eukaryotic ribosomal protein eL39 family. In terms of assembly, interacts with YIH1.

This Encephalitozoon cuniculi (strain GB-M1) (Microsporidian parasite) protein is Large ribosomal subunit protein eL39 (RPL39).